Consider the following 399-residue polypeptide: Stomatin-like protein 1 (399 aa).

Positions 6–10 match the Tyrosine-type lysosomal sorting signal motif; sequence GYRAL. Position 28 is a phosphoserine (Ser-28). Residues 58–78 form a helical; Signal-anchor for type III membrane protein membrane-spanning segment; the sequence is LVSVLGFLLLLLTFPISGWFA. Residues 79-399 are Cytoplasmic-facing; it reads LKIVPTYERM…KLEAVLKALK (321 aa). The region spanning 288 to 399 is the SCP2 domain; sequence KQPVAEGLLT…KLEAVLKALK (112 aa).

The protein belongs to the band 7/mec-2 family. As to quaternary structure, interacts with STOM; may redistribute STOM from the plasma membrane to late endosomes. In terms of tissue distribution, expressed in dorsal root ganglion neurons.

The protein resides in the membrane. Its subcellular location is the cytoplasmic vesicle. It is found in the cell membrane. The protein localises to the late endosome membrane. It localises to the membrane raft. Its function is as follows. May play a role in cholesterol transfer to late endosomes. May play a role in modulating membrane acid-sensing ion channels. Can specifically inhibit proton-gated current of ASIC1 isoform 1. Can increase inactivation speed of ASIC3. May be involved in regulation of proton sensing in dorsal root ganglions. This is Stomatin-like protein 1 (Stoml1) from Mus musculus (Mouse).